The sequence spans 701 residues: Glycine--tRNA ligase beta subunit (701 aa).

The protein belongs to the class-II aminoacyl-tRNA synthetase family. As to quaternary structure, tetramer of two alpha and two beta subunits.

The protein resides in the cytoplasm. It carries out the reaction tRNA(Gly) + glycine + ATP = glycyl-tRNA(Gly) + AMP + diphosphate. The protein is Glycine--tRNA ligase beta subunit of Thiobacillus denitrificans (strain ATCC 25259 / T1).